Reading from the N-terminus, the 456-residue chain is Bifunctional protein GlmU (456 aa).

Positions 1–229 (MSNSAMSVVI…LSEVEGVNNR (229 aa)) are pyrophosphorylase. UDP-N-acetyl-alpha-D-glucosamine-binding positions include 11–14 (LAAG), Lys-25, Gln-76, 81–82 (GT), 103–105 (YGD), Gly-140, Glu-154, Asn-169, and Asn-227. Asp-105 serves as a coordination point for Mg(2+). Asn-227 contacts Mg(2+). The segment at 230–250 (LQLSRLERIYQAEQSEKLLLA) is linker. Residues 251-456 (GVMLLDPARF…QGWQRPVKKK (206 aa)) form an N-acetyltransferase region. Residues Arg-333 and Lys-351 each contribute to the UDP-N-acetyl-alpha-D-glucosamine site. Residue His-363 is the Proton acceptor of the active site. The UDP-N-acetyl-alpha-D-glucosamine site is built by Tyr-366 and Asn-377. Acetyl-CoA contacts are provided by residues Ala-380, 386–387 (NY), Ser-405, Ala-423, and Arg-440.

In the N-terminal section; belongs to the N-acetylglucosamine-1-phosphate uridyltransferase family. The protein in the C-terminal section; belongs to the transferase hexapeptide repeat family. In terms of assembly, homotrimer. Mg(2+) is required as a cofactor.

The protein resides in the cytoplasm. The enzyme catalyses alpha-D-glucosamine 1-phosphate + acetyl-CoA = N-acetyl-alpha-D-glucosamine 1-phosphate + CoA + H(+). The catalysed reaction is N-acetyl-alpha-D-glucosamine 1-phosphate + UTP + H(+) = UDP-N-acetyl-alpha-D-glucosamine + diphosphate. It functions in the pathway nucleotide-sugar biosynthesis; UDP-N-acetyl-alpha-D-glucosamine biosynthesis; N-acetyl-alpha-D-glucosamine 1-phosphate from alpha-D-glucosamine 6-phosphate (route II): step 2/2. It participates in nucleotide-sugar biosynthesis; UDP-N-acetyl-alpha-D-glucosamine biosynthesis; UDP-N-acetyl-alpha-D-glucosamine from N-acetyl-alpha-D-glucosamine 1-phosphate: step 1/1. The protein operates within bacterial outer membrane biogenesis; LPS lipid A biosynthesis. Catalyzes the last two sequential reactions in the de novo biosynthetic pathway for UDP-N-acetylglucosamine (UDP-GlcNAc). The C-terminal domain catalyzes the transfer of acetyl group from acetyl coenzyme A to glucosamine-1-phosphate (GlcN-1-P) to produce N-acetylglucosamine-1-phosphate (GlcNAc-1-P), which is converted into UDP-GlcNAc by the transfer of uridine 5-monophosphate (from uridine 5-triphosphate), a reaction catalyzed by the N-terminal domain. The chain is Bifunctional protein GlmU from Serratia proteamaculans (strain 568).